A 173-amino-acid polypeptide reads, in one-letter code: Ribosome maturation factor RimM (173 aa).

The region spanning 95–169 (DPDEFYDHQL…VIEIDPPEGL (75 aa)) is the PRC barrel domain.

It belongs to the RimM family. As to quaternary structure, binds ribosomal protein uS19.

The protein localises to the cytoplasm. Functionally, an accessory protein needed during the final step in the assembly of 30S ribosomal subunit, possibly for assembly of the head region. Essential for efficient processing of 16S rRNA. May be needed both before and after RbfA during the maturation of 16S rRNA. It has affinity for free ribosomal 30S subunits but not for 70S ribosomes. This chain is Ribosome maturation factor RimM, found in Mycobacteroides abscessus (strain ATCC 19977 / DSM 44196 / CCUG 20993 / CIP 104536 / JCM 13569 / NCTC 13031 / TMC 1543 / L948) (Mycobacterium abscessus).